Reading from the N-terminus, the 71-residue chain is DNA-directed RNA polymerase subunit epsilon (71 aa).

The protein belongs to the RNA polymerase subunit epsilon family. In terms of assembly, monomer. RNAP is composed of a core of 2 alpha, a beta and a beta' subunit. The core is associated with a delta subunit, and at least one of epsilon or omega. When a sigma factor is associated with the core the holoenzyme is formed, which can initiate transcription.

The enzyme catalyses RNA(n) + a ribonucleoside 5'-triphosphate = RNA(n+1) + diphosphate. A non-essential component of RNA polymerase (RNAP). Has a similar structure to bacteriophage T7 protein Gp2 (AC P03704), which is known to bind to RNAP in the DNA binding-cleft. Unlike Gp2 however, this protein does not inhibit transcription initiation. In Geobacillus stearothermophilus (strain DSM 13240 / CIP 106956 / 10), this protein is DNA-directed RNA polymerase subunit epsilon.